Here is a 156-residue protein sequence, read N- to C-terminus: MSRRHKAEKREINPDPKFGDLVITKFMNAIMFDGKKSVAERIVYGALDVVESKVKSDPVALFHRALENVAPHIEVRSRRVGGATYQVPIDVRPDRRQALAIRWLISAARGRNEATMIDRLSGELMDAANNRGSAVKKREDVHRMAEANRAFSHYRW.

It belongs to the universal ribosomal protein uS7 family. As to quaternary structure, part of the 30S ribosomal subunit. Contacts proteins S9 and S11.

Functionally, one of the primary rRNA binding proteins, it binds directly to 16S rRNA where it nucleates assembly of the head domain of the 30S subunit. Is located at the subunit interface close to the decoding center, probably blocks exit of the E-site tRNA. The chain is Small ribosomal subunit protein uS7 from Bartonella henselae (strain ATCC 49882 / DSM 28221 / CCUG 30454 / Houston 1) (Rochalimaea henselae).